The sequence spans 1040 residues: Multidrug resistance protein MdtB (1040 aa).

A run of 12 helical transmembrane segments spans residues 16 to 36, 347 to 367, 369 to 389, 396 to 416, 440 to 460, 472 to 492, 537 to 557, 863 to 883, 888 to 908, 911 to 931, 968 to 988, and 998 to 1018; these read FIMRPVATTLLMVAILLAGII, LMMAIALVVMIIYLFLRNIPA, IIPGVAVPLSLIGTFAVMVFL, LTLMALTIATGFVVDDAIVVI, IGFTIISLTFSLIAVLIPLLF, FAITLAVAILISAVVSLTLTP, WLTLSVALSTLLLSVLLWVFI, LGSTVWLIVAAVVAMYIVLGI, FIHPITILSTLPTAGVGALLA, IAGSELDVIAIIGIILLIGIV, ILMTTLAALLGALPLMLSTGV, and IGMVGGLIVSQVLTLFTTPVI.

The protein belongs to the resistance-nodulation-cell division (RND) (TC 2.A.6) family. MdtB subfamily. Part of a tripartite efflux system composed of MdtA, MdtB and MdtC. MdtB forms a heteromultimer with MdtC.

Its subcellular location is the cell inner membrane. The MdtABC tripartite complex confers resistance against novobiocin and deoxycholate. The protein is Multidrug resistance protein MdtB of Escherichia coli O17:K52:H18 (strain UMN026 / ExPEC).